The chain runs to 273 residues: 4-hydroxy-tetrahydrodipicolinate reductase (273 aa).

NAD(+) is bound by residues 12–17 (GAGGRM) and E38. R39 serves as a coordination point for NADP(+). Residues 102-104 (GTT) and 126-129 (AANF) each bind NAD(+). H159 functions as the Proton donor/acceptor in the catalytic mechanism. H160 contributes to the (S)-2,3,4,5-tetrahydrodipicolinate binding site. The active-site Proton donor is K163. 169-170 (GT) contacts (S)-2,3,4,5-tetrahydrodipicolinate.

Belongs to the DapB family. As to quaternary structure, homotetramer.

It is found in the cytoplasm. It carries out the reaction (S)-2,3,4,5-tetrahydrodipicolinate + NAD(+) + H2O = (2S,4S)-4-hydroxy-2,3,4,5-tetrahydrodipicolinate + NADH + H(+). The catalysed reaction is (S)-2,3,4,5-tetrahydrodipicolinate + NADP(+) + H2O = (2S,4S)-4-hydroxy-2,3,4,5-tetrahydrodipicolinate + NADPH + H(+). The protein operates within amino-acid biosynthesis; L-lysine biosynthesis via DAP pathway; (S)-tetrahydrodipicolinate from L-aspartate: step 4/4. Functionally, catalyzes the conversion of 4-hydroxy-tetrahydrodipicolinate (HTPA) to tetrahydrodipicolinate. The protein is 4-hydroxy-tetrahydrodipicolinate reductase of Yersinia pestis bv. Antiqua (strain Antiqua).